Consider the following 310-residue polypeptide: D-erythrulose 1-phosphate 3-epimerase (310 aa).

The catalysed reaction is D-erythrulose 1-phosphate = L-erythrulose 1-phosphate. Its pathway is carbohydrate metabolism; erythritol degradation. Functionally, catalyzes the racemization of D-erythrulose 1-phosphate to L-erythrulose 1-phosphate. The chain is D-erythrulose 1-phosphate 3-epimerase from Brucella abortus (strain 2308).